The chain runs to 495 residues: EF-hand calcium-binding domain-containing protein 14 (495 aa).

Disordered regions lie at residues 1–50 (MKKR…EEEE) and 381–404 (TNKP…FTSK). At serine 17 the chain carries Phosphoserine. The segment covering 18-31 (RRKKPKKGPSSHRL) has biased composition (basic residues). Positions 37–50 (PDSDSESSSEEEEE) are enriched in acidic residues. EF-hand domains lie at 434–463 (SSTE…WTSL) and 464–495 (GSAM…ALGI). Residues aspartate 477, aspartate 479, aspartate 481, arginine 483, and glutamate 488 each coordinate Ca(2+).

The protein is EF-hand calcium-binding domain-containing protein 14 (EFCAB14) of Homo sapiens (Human).